Consider the following 145-residue polypeptide: Hemoglobin subunit beta (145 aa).

A Globin domain is found at 1–145 (MLTAEEKAAV…VANALAHRYH (145 aa)). At threonine 11 the chain carries Phosphothreonine. A Phosphoserine modification is found at serine 43. The residue at position 58 (lysine 58) is an N6-acetyllysine. Histidine 62 is a heme b binding site. The residue at position 81 (lysine 81) is an N6-acetyllysine. A heme b-binding site is contributed by histidine 91. An S-nitrosocysteine modification is found at cysteine 92.

This sequence belongs to the globin family. As to quaternary structure, heterotetramer of two alpha chains and two beta chains. As to expression, red blood cells.

In terms of biological role, involved in oxygen transport from the lung to the various peripheral tissues. In Bos mutus grunniens (Wild yak), this protein is Hemoglobin subunit beta (HBB).